We begin with the raw amino-acid sequence, 102 residues long: Thioredoxin (102 aa).

Residues 1–102 enclose the Thioredoxin domain; sequence MVQIVSQDNF…SLVKLISKHQ (102 aa). A disulfide bridge links cysteine 28 with cysteine 31.

Belongs to the thioredoxin family.

Functionally, participates in various redox reactions through the reversible oxidation of its active center dithiol to a disulfide and catalyzes dithiol-disulfide exchange reactions. The chain is Thioredoxin (trxA) from Chlamydia muridarum (strain MoPn / Nigg).